The chain runs to 120 residues: Large ribosomal subunit protein bL17 (120 aa).

This sequence belongs to the bacterial ribosomal protein bL17 family. In terms of assembly, part of the 50S ribosomal subunit. Contacts protein L32.

This chain is Large ribosomal subunit protein bL17, found in Bacillus cereus (strain ATCC 14579 / DSM 31 / CCUG 7414 / JCM 2152 / NBRC 15305 / NCIMB 9373 / NCTC 2599 / NRRL B-3711).